Here is a 376-residue protein sequence, read N- to C-terminus: Queuine tRNA-ribosyltransferase (376 aa).

The Proton acceptor role is filled by D90. Substrate is bound by residues 90–94 (DSGGF), D144, Q193, and G220. An RNA binding region spans residues 251–257 (GVGTPED). The active-site Nucleophile is the D270. The RNA binding; important for wobble base 34 recognition stretch occupies residues 275–279 (TRNAR). C308, C310, C313, and H339 together coordinate Zn(2+).

Belongs to the queuine tRNA-ribosyltransferase family. In terms of assembly, homodimer. Within each dimer, one monomer is responsible for RNA recognition and catalysis, while the other monomer binds to the replacement base PreQ1. It depends on Zn(2+) as a cofactor.

The catalysed reaction is 7-aminomethyl-7-carbaguanine + guanosine(34) in tRNA = 7-aminomethyl-7-carbaguanosine(34) in tRNA + guanine. The protein operates within tRNA modification; tRNA-queuosine biosynthesis. Functionally, catalyzes the base-exchange of a guanine (G) residue with the queuine precursor 7-aminomethyl-7-deazaguanine (PreQ1) at position 34 (anticodon wobble position) in tRNAs with GU(N) anticodons (tRNA-Asp, -Asn, -His and -Tyr). Catalysis occurs through a double-displacement mechanism. The nucleophile active site attacks the C1' of nucleotide 34 to detach the guanine base from the RNA, forming a covalent enzyme-RNA intermediate. The proton acceptor active site deprotonates the incoming PreQ1, allowing a nucleophilic attack on the C1' of the ribose to form the product. After dissociation, two additional enzymatic reactions on the tRNA convert PreQ1 to queuine (Q), resulting in the hypermodified nucleoside queuosine (7-(((4,5-cis-dihydroxy-2-cyclopenten-1-yl)amino)methyl)-7-deazaguanosine). In Campylobacter concisus (strain 13826), this protein is Queuine tRNA-ribosyltransferase.